A 602-amino-acid chain; its full sequence is Elongation factor 4 (602 aa).

The tr-type G domain occupies 7–189; the sequence is RNIRNFSIIA…AIVQRIPAPQ (183 aa). GTP-binding positions include 19-24 and 136-139; these read DHGKST and NKID.

Belongs to the TRAFAC class translation factor GTPase superfamily. Classic translation factor GTPase family. LepA subfamily.

It is found in the cell inner membrane. It catalyses the reaction GTP + H2O = GDP + phosphate + H(+). Required for accurate and efficient protein synthesis under certain stress conditions. May act as a fidelity factor of the translation reaction, by catalyzing a one-codon backward translocation of tRNAs on improperly translocated ribosomes. Back-translocation proceeds from a post-translocation (POST) complex to a pre-translocation (PRE) complex, thus giving elongation factor G a second chance to translocate the tRNAs correctly. Binds to ribosomes in a GTP-dependent manner. The sequence is that of Elongation factor 4 from Xylella fastidiosa (strain M23).